A 122-amino-acid chain; its full sequence is Proteasome assembly chaperone 3 (122 aa).

Methionine 1 carries the N-acetylmethionine modification.

This sequence belongs to the PSMG3 family. Homodimer. Interacts with PSMG4. Interacts directly with alpha and beta subunits of the 20S proteasome but dissociates before the formation of half-proteasomes, probably upon recruitment of POMP.

In terms of biological role, chaperone protein which promotes assembly of the 20S proteasome. May cooperate with PSMG1-PSMG2 heterodimers to orchestrate the correct assembly of proteasomes. The polypeptide is Proteasome assembly chaperone 3 (PSMG3) (Bos taurus (Bovine)).